The chain runs to 169 residues: Cytochrome c oxidase subunit 4 isoform 1, mitochondrial (169 aa).

The N-terminal 22 residues, 1–22 (MLATRVFSLVGKRAISTSVCVR), are a transit peptide targeting the mitochondrion. Residues 23–98 (AHESVVKSED…SFAEMNRGSN (76 aa)) lie on the Mitochondrial matrix side of the membrane. Lysine 29 bears the N6-acetyllysine; alternate mark. Lysine 29 is modified (N6-succinyllysine; alternate). Lysine 53 is subject to N6-acetyllysine. Residues serine 56 and serine 58 each carry the phosphoserine modification. Lysine 60 bears the N6-acetyllysine; alternate mark. An N6-succinyllysine; alternate modification is found at lysine 60. N6-acetyllysine is present on lysine 67. Residues 99-124 (EWKTVVGGAMFFIGFTALVIMWQKHY) traverse the membrane as a helical segment. The Mitochondrial intermembrane portion of the chain corresponds to 125-169 (VYGPLPQSFDKEWVAKQTKRMLDMKVNPIQGLASKWDYEKNEWKK).

This sequence belongs to the cytochrome c oxidase IV family. Component of the cytochrome c oxidase (complex IV, CIV), a multisubunit enzyme composed of 14 subunits. The complex is composed of a catalytic core of 3 subunits MT-CO1, MT-CO2 and MT-CO3, encoded in the mitochondrial DNA, and 11 supernumerary subunits COX4I1 (or COX4I2), COX5A, COX5B, COX6A1 (or COX6A2), COX6B1 (or COX6B2), COX6C, COX7A2 (or COX7A1), COX7B, COX7C, COX8A and NDUFA4, which are encoded in the nuclear genome. The complex exists as a monomer or a dimer and forms supercomplexes (SCs) in the inner mitochondrial membrane with NADH-ubiquinone oxidoreductase (complex I, CI) and ubiquinol-cytochrome c oxidoreductase (cytochrome b-c1 complex, complex III, CIII), resulting in different assemblies (supercomplex SCI(1)III(2)IV(1) and megacomplex MCI(2)III(2)IV(2)). Interacts with AFG1L. Interacts with PHB2; the interaction decreases in absence of SPHK2. Interacts with ABCB7; this interaction allows the regulation of cellular iron homeostasis and cellular reactive oxygen species (ROS) levels in cardiomyocytes. Interacts with FLVCR2; this interaction occurs in the absence of heme and is disrupted upon heme binding. Interacts with IRGC. As to expression, ubiquitous.

It is found in the mitochondrion inner membrane. It functions in the pathway energy metabolism; oxidative phosphorylation. Functionally, component of the cytochrome c oxidase, the last enzyme in the mitochondrial electron transport chain which drives oxidative phosphorylation. The respiratory chain contains 3 multisubunit complexes succinate dehydrogenase (complex II, CII), ubiquinol-cytochrome c oxidoreductase (cytochrome b-c1 complex, complex III, CIII) and cytochrome c oxidase (complex IV, CIV), that cooperate to transfer electrons derived from NADH and succinate to molecular oxygen, creating an electrochemical gradient over the inner membrane that drives transmembrane transport and the ATP synthase. Cytochrome c oxidase is the component of the respiratory chain that catalyzes the reduction of oxygen to water. Electrons originating from reduced cytochrome c in the intermembrane space (IMS) are transferred via the dinuclear copper A center (CU(A)) of subunit 2 and heme A of subunit 1 to the active site in subunit 1, a binuclear center (BNC) formed by heme A3 and copper B (CU(B)). The BNC reduces molecular oxygen to 2 water molecules using 4 electrons from cytochrome c in the IMS and 4 protons from the mitochondrial matrix. The chain is Cytochrome c oxidase subunit 4 isoform 1, mitochondrial from Homo sapiens (Human).